The chain runs to 246 residues: Large ribosomal subunit protein uL3 (246 aa).

Gln151 bears the N5-methylglutamine mark.

It belongs to the universal ribosomal protein uL3 family. In terms of assembly, part of the 50S ribosomal subunit. Forms a cluster with proteins L14 and L19. Post-translationally, methylated by PrmB.

One of the primary rRNA binding proteins, it binds directly near the 3'-end of the 23S rRNA, where it nucleates assembly of the 50S subunit. The polypeptide is Large ribosomal subunit protein uL3 (Bartonella bacilliformis (strain ATCC 35685 / KC583 / Herrer 020/F12,63)).